We begin with the raw amino-acid sequence, 190 residues long: ATP synthase subunit delta (190 aa).

The protein belongs to the ATPase delta chain family. As to quaternary structure, F-type ATPases have 2 components, F(1) - the catalytic core - and F(0) - the membrane proton channel. F(1) has five subunits: alpha(3), beta(3), gamma(1), delta(1), epsilon(1). F(0) has three main subunits: a(1), b(2) and c(10-14). The alpha and beta chains form an alternating ring which encloses part of the gamma chain. F(1) is attached to F(0) by a central stalk formed by the gamma and epsilon chains, while a peripheral stalk is formed by the delta and b chains.

The protein localises to the cell inner membrane. Its function is as follows. F(1)F(0) ATP synthase produces ATP from ADP in the presence of a proton or sodium gradient. F-type ATPases consist of two structural domains, F(1) containing the extramembraneous catalytic core and F(0) containing the membrane proton channel, linked together by a central stalk and a peripheral stalk. During catalysis, ATP synthesis in the catalytic domain of F(1) is coupled via a rotary mechanism of the central stalk subunits to proton translocation. In terms of biological role, this protein is part of the stalk that links CF(0) to CF(1). It either transmits conformational changes from CF(0) to CF(1) or is implicated in proton conduction. The protein is ATP synthase subunit delta of Petrotoga mobilis (strain DSM 10674 / SJ95).